We begin with the raw amino-acid sequence, 129 residues long: Ribulose bisphosphate carboxylase small subunit (129 aa).

A disordered region spans residues 109–129 (LRMTRTESNGRSQHYMWETQR).

This sequence belongs to the RuBisCO small chain family. As to quaternary structure, heterohexadecamer of 8 large and 8 small subunits.

Its function is as follows. RuBisCO catalyzes two reactions: the carboxylation of D-ribulose 1,5-bisphosphate, the primary event in carbon dioxide fixation, as well as the oxidative fragmentation of the pentose substrate. Both reactions occur simultaneously and in competition at the same active site. Although the small subunit is not catalytic it is essential for maximal activity. The polypeptide is Ribulose bisphosphate carboxylase small subunit (Rhizobium meliloti (strain 1021) (Ensifer meliloti)).